We begin with the raw amino-acid sequence, 214 residues long: MRSPRRCKICAVSADQLVVDPVVAAHRLLGATITGRGVCAIVVEVEAYGGVPDGPWPDAAAHSYHGRNDRNAVMFGPPGRLYTYCSHGIHVCANVSCGPDGTAAAVLIRAGALENGADVARSRRGASVRTVALARGPGNLCSALGITMDDNGIDVFAADSPVTLVLNEAQEAMSGPRVGISHAADRPWRLWLPGRPEVSTYRRSPRAPAPGASD.

Belongs to the DNA glycosylase MPG family.

The protein is Putative 3-methyladenine DNA glycosylase of Mycobacterium leprae (strain Br4923).